Here is a 66-residue protein sequence, read N- to C-terminus: Large ribosomal subunit protein bL31 (66 aa).

The Zn(2+) site is built by Cys16, Cys18, Cys36, and Cys39.

It belongs to the bacterial ribosomal protein bL31 family. Type A subfamily. As to quaternary structure, part of the 50S ribosomal subunit. Zn(2+) serves as cofactor.

Its function is as follows. Binds the 23S rRNA. The polypeptide is Large ribosomal subunit protein bL31 (Nautilia profundicola (strain ATCC BAA-1463 / DSM 18972 / AmH)).